Here is a 555-residue protein sequence, read N- to C-terminus: CTP synthase (555 aa).

The interval 1–265 (MTRYIFITGG…GNRVCEKLNI (265 aa)) is amidoligase domain. A CTP-binding site is contributed by serine 13. Residue serine 13 coordinates UTP. Residues 14 to 19 (SLGKGI) and aspartate 71 each bind ATP. Residues aspartate 71 and glutamate 139 each coordinate Mg(2+). CTP-binding positions include 146–148 (DIE), 186–191 (KTKPTQ), and lysine 222. UTP-binding positions include 186 to 191 (KTKPTQ) and lysine 222. The Glutamine amidotransferase type-1 domain maps to 290 to 541 (TVAVVGKYVD…IKAGLAAKEA (252 aa)). Position 351 (glycine 351) interacts with L-glutamine. Catalysis depends on cysteine 378, which acts as the Nucleophile; for glutamine hydrolysis. L-glutamine is bound by residues 379-382 (LGMQ), glutamate 402, and arginine 469. Residues histidine 514 and glutamate 516 contribute to the active site.

It belongs to the CTP synthase family. In terms of assembly, homotetramer.

The catalysed reaction is UTP + L-glutamine + ATP + H2O = CTP + L-glutamate + ADP + phosphate + 2 H(+). It carries out the reaction L-glutamine + H2O = L-glutamate + NH4(+). The enzyme catalyses UTP + NH4(+) + ATP = CTP + ADP + phosphate + 2 H(+). It functions in the pathway pyrimidine metabolism; CTP biosynthesis via de novo pathway; CTP from UDP: step 2/2. Its activity is regulated as follows. Allosterically activated by GTP, when glutamine is the substrate; GTP has no effect on the reaction when ammonia is the substrate. The allosteric effector GTP functions by stabilizing the protein conformation that binds the tetrahedral intermediate(s) formed during glutamine hydrolysis. Inhibited by the product CTP, via allosteric rather than competitive inhibition. Catalyzes the ATP-dependent amination of UTP to CTP with either L-glutamine or ammonia as the source of nitrogen. Regulates intracellular CTP levels through interactions with the four ribonucleotide triphosphates. This Coxiella burnetii (strain CbuK_Q154) (Coxiella burnetii (strain Q154)) protein is CTP synthase.